Reading from the N-terminus, the 391-residue chain is Multidrug resistance protein MdtL (391 aa).

Transmembrane regions (helical) follow at residues F4–V24, I42–A62, P69–E89, L93–F113, L131–M151, S158–L178, F203–V222, A245–F265, T269–P289, V293–M313, L331–I351, and M356–A376.

Belongs to the major facilitator superfamily. DHA1 family. MdtL (TC 2.A.1.2.22) subfamily.

The protein localises to the cell inner membrane. Functionally, confers resistance to chloramphenicol. This chain is Multidrug resistance protein MdtL, found in Escherichia coli (strain 55989 / EAEC).